The sequence spans 1080 residues: Presequence protease 1, chloroplastic/mitochondrial (1080 aa).

A chloroplast and mitochondrion-targeting transit peptide spans 1–85; sequence MLRTVSCLAS…GQFSRLSVRA (85 aa). An N-acetylvaline modification is found at V86. Zn(2+) is bound at residue H162. E165 (proton acceptor) is an active-site residue. H166 is a binding site for Zn(2+). E240 is a catalytic residue. E262 serves as a coordination point for Zn(2+). Positions 571–612 form a coiled coil; the sequence is EKATQEEVEEKNILEKVKAAMTEEDLAELARATEELKLKQET. Mg(2+) is bound at residue R705.

This sequence belongs to the peptidase M16 family. PreP subfamily. As to quaternary structure, homodimer. It depends on Zn(2+) as a cofactor. Requires Mg(2+) as cofactor. In terms of tissue distribution, expressed only in siliques and flowers.

The protein localises to the plastid. It localises to the chloroplast stroma. Its subcellular location is the mitochondrion matrix. With respect to regulation, inactive in the absence of MgCl(2) and CaCl(2) and full activation at 10 mM concentrations of either ion. Completely inhibited by the metal chelator orthophenanthroline, but not affected by phenylmethylsulfonyl fluoride (PMSF) or N-ethylmaleimide (NEM). Functionally, ATP-independent protease that degrades both mitochondrial and chloroplastic transit peptides after their cleavage. Also degrades other unstructured peptides. Specific for peptides in the range of 10 to 65 residues. Shows a preference for cleavage after small polar residues and before basic residues, with a bias for positively charged amino acid residues. This Arabidopsis thaliana (Mouse-ear cress) protein is Presequence protease 1, chloroplastic/mitochondrial (PREP1).